Here is a 513-residue protein sequence, read N- to C-terminus: L-threonine dehydratase biosynthetic IlvA (513 aa).

The residue at position 63 (K63) is an N6-(pyridoxal phosphate)lysine. Pyridoxal 5'-phosphate-binding positions include N90, 189-193, and S316; that span reads GGGGL. ACT-like domains follow at residues 340–411 and 433–504; these read ALLA…DMSD and RLYT…DVTK.

The protein belongs to the serine/threonine dehydratase family. In terms of assembly, homotetramer. Requires pyridoxal 5'-phosphate as cofactor.

The enzyme catalyses L-threonine = 2-oxobutanoate + NH4(+). Its pathway is amino-acid biosynthesis; L-isoleucine biosynthesis; 2-oxobutanoate from L-threonine: step 1/1. Functionally, catalyzes the anaerobic formation of alpha-ketobutyrate and ammonia from threonine in a two-step reaction. The first step involved a dehydration of threonine and a production of enamine intermediates (aminocrotonate), which tautomerizes to its imine form (iminobutyrate). Both intermediates are unstable and short-lived. The second step is the nonenzymatic hydrolysis of the enamine/imine intermediates to form 2-ketobutyrate and free ammonia. In the low water environment of the cell, the second step is accelerated by RidA. In Haemophilus influenzae (strain ATCC 51907 / DSM 11121 / KW20 / Rd), this protein is L-threonine dehydratase biosynthetic IlvA (ilvA).